A 411-amino-acid chain; its full sequence is MTGLCPLHQPSPLDHPHSGGTPMQNLSQLDVKGKRVLVRVDYNVPVGDGVVQDDTRITASVPTIKKLLDGGASVVLMSHFGRPKNGPEDKYSLKPVAEAVSRALGQDVKFIPSLPGSDETLQAVQALRPGEVALLENVRFEAGEEKNDAALNDKLAKLGDAFVLDAFGSAHRAHSSVSGVAGKLPHAAGGLLQSEVDALGKLLHAPEHPYVVIIGGAKVSDKIKVIENLLPKVDRMLIGGGMMFTFIKARGGQIGNSLVEDDQLDLAKGLLEKYGDKLLLPTDAVAADKFAADAQSKVVPADQIPDGWMGLDIGPDTQRAYADALQGAKTVFWNGPMGVFEFDQFAAGTNAVAAAVGSLKDQAYTVVGGGDSVSAINKSGKADQIDHISTGGGASLELLEGKELPGVVAMA.

A disordered region spans residues 1 to 24 (MTGLCPLHQPSPLDHPHSGGTPMQ). Substrate contacts are provided by residues 41–43 (DYN), Arg-56, 79–82 (HFGR), Arg-139, and Arg-172. Residues Lys-222, Gly-310, Glu-341, and 369 to 372 (GGDS) contribute to the ATP site.

It belongs to the phosphoglycerate kinase family. In terms of assembly, monomer.

It is found in the cytoplasm. It carries out the reaction (2R)-3-phosphoglycerate + ATP = (2R)-3-phospho-glyceroyl phosphate + ADP. The protein operates within carbohydrate degradation; glycolysis; pyruvate from D-glyceraldehyde 3-phosphate: step 2/5. This chain is Phosphoglycerate kinase, found in Deinococcus radiodurans (strain ATCC 13939 / DSM 20539 / JCM 16871 / CCUG 27074 / LMG 4051 / NBRC 15346 / NCIMB 9279 / VKM B-1422 / R1).